We begin with the raw amino-acid sequence, 82 residues long: Protein Rv1078A (82 aa).

Basic residues predominate over residues 35–54; that stretch reads GGPTRRLRRRPAVTRRRRPD. A disordered region spans residues 35 to 82; that stretch reads GGPTRRLRRRPAVTRRRRPDRRFVRCRPSPTRRGLPGCWRHSSTGPHT.

The protein resides in the cytoplasm. The sequence is that of Protein Rv1078A from Mycobacterium tuberculosis (strain ATCC 25618 / H37Rv).